The sequence spans 172 residues: Small ribosomal subunit protein uS5 (172 aa).

The 64-residue stretch at 17–80 (LREKMISVNR…EQARRNMFKV (64 aa)) folds into the S5 DRBM domain.

Belongs to the universal ribosomal protein uS5 family. As to quaternary structure, part of the 30S ribosomal subunit. Contacts proteins S4 and S8.

Functionally, with S4 and S12 plays an important role in translational accuracy. Located at the back of the 30S subunit body where it stabilizes the conformation of the head with respect to the body. This chain is Small ribosomal subunit protein uS5, found in Paraburkholderia xenovorans (strain LB400).